The primary structure comprises 155 residues: MGRFIFVSFGLLVVFLSLSGTAADCPSGWSSYDGHCYQVFSDLKNWDDAESFCSGQHEGSRLASIHSREEEAFVGKMASRTLKYTSMWLGLNNPWKECKWEWSDDTRLDYKVWTRRPYCTVMVVKTDRIFWFNRGCEKSVSFVCKFKAYSEDAAE.

The first 23 residues, 1 to 23 (MGRFIFVSFGLLVVFLSLSGTAA), serve as a signal peptide directing secretion. Disulfide bonds link Cys25-Cys36, Cys53-Cys144, and Cys119-Cys136. A C-type lectin domain is found at 32–145 (YDGHCYQVFS…CEKSVSFVCK (114 aa)).

This sequence belongs to the snaclec family. In terms of assembly, heterodimer; disulfide-linked.

The protein localises to the secreted. Functionally, interferes with one step of hemostasis (modulation of platelet aggregation, or coagulation cascade, for example). The chain is Snaclec clone 2100755 from Deinagkistrodon acutus (Hundred-pace snake).